We begin with the raw amino-acid sequence, 636 residues long: Chaperone protein DnaK (636 aa).

Residue T198 is modified to Phosphothreonine; by autocatalysis. Residues 602–613 (QPAGEEQAGAAA) are compositionally biased toward low complexity. The segment at 602–636 (QPAGEEQAGAAAHEGEAKGEKVVDADFEEVKEDKK) is disordered. Residues 614–625 (HEGEAKGEKVVD) show a composition bias toward basic and acidic residues. Positions 626-636 (ADFEEVKEDKK) are enriched in acidic residues.

The protein belongs to the heat shock protein 70 family.

Its function is as follows. Acts as a chaperone. This is Chaperone protein DnaK from Geotalea daltonii (strain DSM 22248 / JCM 15807 / FRC-32) (Geobacter daltonii).